Reading from the N-terminus, the 398-residue chain is Ornithine aminotransferase (398 aa).

Lys-255 bears the N6-(pyridoxal phosphate)lysine mark.

Belongs to the class-III pyridoxal-phosphate-dependent aminotransferase family. OAT subfamily. It depends on pyridoxal 5'-phosphate as a cofactor.

The protein resides in the cytoplasm. The enzyme catalyses a 2-oxocarboxylate + L-ornithine = L-glutamate 5-semialdehyde + an L-alpha-amino acid. It participates in amino-acid biosynthesis; L-proline biosynthesis; L-glutamate 5-semialdehyde from L-ornithine: step 1/1. Catalyzes the interconversion of ornithine to glutamate semialdehyde. The chain is Ornithine aminotransferase from Geobacillus sp. (strain WCH70).